A 448-amino-acid polypeptide reads, in one-letter code: Phosphoglucosamine mutase (448 aa).

Serine 104 (phosphoserine intermediate) is an active-site residue. Positions 104, 241, 243, and 245 each coordinate Mg(2+). Serine 104 bears the Phosphoserine mark.

The protein belongs to the phosphohexose mutase family. Mg(2+) serves as cofactor. Activated by phosphorylation.

The enzyme catalyses alpha-D-glucosamine 1-phosphate = D-glucosamine 6-phosphate. Its function is as follows. Catalyzes the conversion of glucosamine-6-phosphate to glucosamine-1-phosphate. This is Phosphoglucosamine mutase from Nocardioides sp. (strain ATCC BAA-499 / JS614).